The following is a 352-amino-acid chain: C-C chemokine receptor type 5 (352 aa).

Residues 1–30 (MDYQVSSPIYDIDYGASEPCRKTDVKQMGA) are Extracellular-facing. Tyr3 carries the sulfotyrosine modification. Residues Ser6 and Ser7 are each glycosylated (O-linked (GalNAc...) serine). Sulfotyrosine occurs at positions 10 and 14. 2 disulfide bridges follow: Cys20/Cys269 and Cys101/Cys178. The chain crosses the membrane as a helical span at residues 31–58 (HLLPPLYSMVFLFGFVGNMLVVLILVNC). At 59–68 (KRPKSMTDIY) the chain is on the cytoplasmic side. Residues 69-89 (LLNLAISDLLFLFTVPFWAHY) form a helical membrane-spanning segment. Topologically, residues 90 to 102 (AAGQWDFGNTMCQ) are extracellular. A helical transmembrane segment spans residues 103-124 (FLTGLYFIGFFSGIFFIILLTI). Residues 125–141 (DRYLAIVHAVFALKART) are Cytoplasmic-facing. The helical transmembrane segment at 142–166 (VTFGVMTSVITWVVAVFASLPGIIF) threads the bilayer. Topologically, residues 167–198 (TRSQKEGYHYTCSPHFPFGQYQFWKNFETLKM) are extracellular. The helical transmembrane segment at 199–218 (VILGLVLPLLVMVICYSGIL) threads the bilayer. Residues 219-235 (KTLLRCRNEKKRHRAVR) lie on the Cytoplasmic side of the membrane. A helical transmembrane segment spans residues 236 to 260 (LIFTIMIVYFLFWAPYNIVLLLNTY). At 261-277 (QEFFGLNNCSSSNRLDQ) the chain is on the extracellular side. A helical membrane pass occupies residues 278–301 (AMQVTETLGMTHCCVNPIIYAFVG). The Cytoplasmic segment spans residues 302 to 352 (EKFRNYLLVFFQKHIAKCFCECCSIFQKEAPERANSVYTRSTGEQEISVGL). S-palmitoyl cysteine attachment occurs at residues Cys321, Cys323, and Cys324. Phosphoserine; by BARK1 occurs at positions 337, 342, and 349.

It belongs to the G-protein coupled receptor 1 family. In terms of assembly, interacts with PRAF2. Efficient ligand binding to CCL3/MIP-1alpha and CCL4/MIP-1beta requires sulfation, O-glycosylation and sialic acid modifications. Glycosylation on Ser-6 is required for efficient binding of CCL4. Interacts with GRK2. Interacts with ARRB1 and ARRB2. Interacts with CNIH4. Interacts with S100A4; this interaction stimulates T-lymphocyte chemotaxis. Sulfated on at least 2 of the N-terminal tyrosines. Sulfation is required for efficient binding of the chemokines, CCL3 and CCL4. Post-translationally, palmitoylation in the C-terminal is important for cell surface expression. In terms of processing, phosphorylation on serine residues in the C-terminal is stimulated by binding CC chemokines especially by APO-RANTES. O-glycosylated, but not N-glycosylated. Ser-6 appears to be the major site even if Ser-7 may be also O-glycosylated. Also sialylated glycans present which contribute to chemokine binding. Ser-17 may also be glycosylated and, if so, with small moieties such as a T-antigen.

The protein localises to the cell membrane. Receptor for a number of inflammatory CC-chemokines including CCL3/MIP-1-alpha, CCL4/MIP-1-beta and RANTES and subsequently transduces a signal by increasing the intracellular calcium ion level. May play a role in the control of granulocytic lineage proliferation or differentiation. Participates in T-lymphocyte migration to the infection site by acting as a chemotactic receptor. The sequence is that of C-C chemokine receptor type 5 (CCR5) from Ateles geoffroyi (Black-handed spider monkey).